The chain runs to 551 residues: Serine/threonine-protein kinase ppk21 (551 aa).

The segment at 24–43 (EARGERNPVKPQSSNVVPGT) is disordered. The Protein kinase domain occupies 55-315 (YVFGDIIGDG…TQQIKQFPFF (261 aa)). Residues 65–67 (SFS) and Lys-84 contribute to the ATP site. The PIF-pocket stretch occupies residues 86–131 (LDKKYIVKENKVKYVNIERDSMMRLNGFPGISRLFHTFQDDLKLYY). Residues 134–136 (ELA) and Glu-140 each bind ATP. Catalysis depends on Asp-179, which acts as the Proton acceptor. Residues Glu-183 and Asp-197 each coordinate ATP. At Ser-220 the chain carries Phosphoserine; by autocatalysis. Ser-538 bears the Phosphoserine mark.

This sequence belongs to the protein kinase superfamily. AGC Ser/Thr protein kinase family. PDPK1 subfamily.

It localises to the cytoplasm. Its subcellular location is the nucleus. It is found in the cytoskeleton. The protein localises to the microtubule organizing center. The protein resides in the spindle pole body. It carries out the reaction L-seryl-[protein] + ATP = O-phospho-L-seryl-[protein] + ADP + H(+). It catalyses the reaction L-threonyl-[protein] + ATP = O-phospho-L-threonyl-[protein] + ADP + H(+). The sequence is that of Serine/threonine-protein kinase ppk21 (ppk21) from Schizosaccharomyces pombe (strain 972 / ATCC 24843) (Fission yeast).